The sequence spans 409 residues: D-galactonate dehydratase family member Achl_0790 (409 aa).

Aspartate 217 is a binding site for Mg(2+). A D-arabinonate-binding site is contributed by histidine 219. Mg(2+) is bound by residues glutamate 243 and glutamate 269. Residues glutamate 269, arginine 290, histidine 319, and glutamate 346 each coordinate D-arabinonate.

This sequence belongs to the mandelate racemase/muconate lactonizing enzyme family. GalD subfamily.

Has no detectable activity with D-mannonate and with a panel of 70 other acid sugars (in vitro), in spite of the conservation of the residues that are expected to be important for catalytic activity and cofactor binding. May have evolved a divergent function. The sequence is that of D-galactonate dehydratase family member Achl_0790 from Pseudarthrobacter chlorophenolicus (strain ATCC 700700 / DSM 12829 / CIP 107037 / JCM 12360 / KCTC 9906 / NCIMB 13794 / A6) (Arthrobacter chlorophenolicus).